The following is a 136-amino-acid chain: UPF0216 protein PYRAB16100 (136 aa).

It belongs to the UPF0216 family.

The polypeptide is UPF0216 protein PYRAB16100 (Pyrococcus abyssi (strain GE5 / Orsay)).